The following is a 50-amino-acid chain: Large ribosomal subunit protein bL33 (50 aa).

Belongs to the bacterial ribosomal protein bL33 family.

The polypeptide is Large ribosomal subunit protein bL33 (Hydrogenovibrio crunogenus (strain DSM 25203 / XCL-2) (Thiomicrospira crunogena)).